The chain runs to 94 residues: MLKPLGDRVILEAKDEEEQTVGGIVLASNAKEKSQTGKIIAVGNGTVLDNGQTVPMNVKVGDTVVYDKYAGTEVSYEDKKYLVVHEKDLVAVVE.

The protein belongs to the GroES chaperonin family. Heptamer of 7 subunits arranged in a ring. Interacts with the chaperonin GroEL.

The protein resides in the cytoplasm. Functionally, together with the chaperonin GroEL, plays an essential role in assisting protein folding. The GroEL-GroES system forms a nano-cage that allows encapsulation of the non-native substrate proteins and provides a physical environment optimized to promote and accelerate protein folding. GroES binds to the apical surface of the GroEL ring, thereby capping the opening of the GroEL channel. In Pediococcus pentosaceus (strain ATCC 25745 / CCUG 21536 / LMG 10740 / 183-1w), this protein is Co-chaperonin GroES.